A 310-amino-acid polypeptide reads, in one-letter code: UDP-N-acetylenolpyruvoylglucosamine reductase (310 aa).

In terms of domain architecture, FAD-binding PCMH-type spans 30-200 (RVGGPAQWLA…VAAEFQLEPG (171 aa)). The active site involves Arg179. Residue Ser230 is the Proton donor of the active site. Residue Glu300 is part of the active site.

Belongs to the MurB family. Requires FAD as cofactor.

It is found in the cytoplasm. The enzyme catalyses UDP-N-acetyl-alpha-D-muramate + NADP(+) = UDP-N-acetyl-3-O-(1-carboxyvinyl)-alpha-D-glucosamine + NADPH + H(+). It participates in cell wall biogenesis; peptidoglycan biosynthesis. Cell wall formation. The sequence is that of UDP-N-acetylenolpyruvoylglucosamine reductase from Synechococcus sp. (strain WH7803).